We begin with the raw amino-acid sequence, 449 residues long: Tubulin alpha chain (449 aa).

Gln11, Glu71, Ser140, Gly144, Thr145, Thr179, Asn206, and Asn228 together coordinate GTP. Glu71 serves as a coordination point for Mg(2+). The active site involves Glu254.

This sequence belongs to the tubulin family. Dimer of alpha and beta chains. A typical microtubule is a hollow water-filled tube with an outer diameter of 25 nm and an inner diameter of 15 nM. Alpha-beta heterodimers associate head-to-tail to form protofilaments running lengthwise along the microtubule wall with the beta-tubulin subunit facing the microtubule plus end conferring a structural polarity. Microtubules usually have 13 protofilaments but different protofilament numbers can be found in some organisms and specialized cells. Mg(2+) serves as cofactor.

The protein localises to the cytoplasm. It localises to the cytoskeleton. The enzyme catalyses GTP + H2O = GDP + phosphate + H(+). In terms of biological role, tubulin is the major constituent of microtubules, a cylinder consisting of laterally associated linear protofilaments composed of alpha- and beta-tubulin heterodimers. Microtubules grow by the addition of GTP-tubulin dimers to the microtubule end, where a stabilizing cap forms. Below the cap, tubulin dimers are in GDP-bound state, owing to GTPase activity of alpha-tubulin. This chain is Tubulin alpha chain (TUB1), found in Gibberella zeae (strain ATCC MYA-4620 / CBS 123657 / FGSC 9075 / NRRL 31084 / PH-1) (Wheat head blight fungus).